The following is a 446-amino-acid chain: WD repeat domain phosphoinositide-interacting protein 1 (446 aa).

Positions 131–136 (LLKTVL) match the Nuclear receptor interaction motif. The stretch at 184 to 224 (AHEGTLAAITFNSSGSKLASASEKGTVIRVFSVPEGQKLYE) is one WD 1 repeat. Residues 225-228 (FRRG) carry the L/FRRG motif motif. 2 WD repeats span residues 230–269 (KRYV…DSRP) and 312–351 (SGQK…GGEC). Positions 386–406 (ARPSTSAASTVPGYSEDGGAL) are disordered.

This sequence belongs to the WD repeat PROPPIN family. Interacts with androgen receptor (AR) and the estrogen receptors ESR1 and ESR2. Interacts with WIPI2. Interacts with WDR45. Interacts with ATG16L1. May interact with NUDC.

The protein localises to the golgi apparatus. Its subcellular location is the trans-Golgi network. The protein resides in the endosome. It is found in the cytoplasmic vesicle. It localises to the clathrin-coated vesicle. The protein localises to the preautophagosomal structure membrane. Its subcellular location is the cytoplasm. The protein resides in the cytoskeleton. Component of the autophagy machinery that controls the major intracellular degradation process by which cytoplasmic materials are packaged into autophagosomes and delivered to lysosomes for degradation. Plays an important role in starvation- and calcium-mediated autophagy, as well as in mitophagy. Functions downstream of the ULK1 and PI3-kinases that produce phosphatidylinositol 3-phosphate (PtdIns3P) on membranes of the endoplasmic reticulum once activated. Binds phosphatidylinositol 3-phosphate (PtdIns3P), and maybe other phosphoinositides including PtdIns3,5P2 and PtdIns5P, and is recruited to phagophore assembly sites at the endoplasmic reticulum membranes. There, it assists WIPI2 in the recruitment of ATG12-ATG5-ATG16L1, a complex that directly controls the elongation of the nascent autophagosomal membrane. Together with WDR45/WIPI4, promotes ATG2 (ATG2A or ATG2B)-mediated lipid transfer by enhancing ATG2-association with phosphatidylinositol 3-monophosphate (PI3P)-containing membranes. Involved in xenophagy of Staphylococcus aureus. Invading S.aureus cells become entrapped in autophagosome-like WIPI1 positive vesicles targeted for lysosomal degradation. Also plays a distinct role in controlling the transcription of melanogenic enzymes and melanosome maturation, a process that is distinct from starvation-induced autophagy. May also regulate the trafficking of proteins involved in the mannose-6-phosphate receptor (MPR) recycling pathway. In Mus musculus (Mouse), this protein is WD repeat domain phosphoinositide-interacting protein 1 (Wipi1).